The sequence spans 721 residues: Pentatricopeptide repeat-containing protein At3g49710 (721 aa).

PPR repeat units follow at residues 42 to 72 (STYL…TEEP), 73 to 103 (NVFS…IPQP), 104 to 138 (DTVS…GFEV), 139 to 169 (DGFT…SGGF), 172 to 202 (YSSV…MDEL), 204 to 238 (DEVS…GFKI), 239 to 273 (DMFT…GFHQ), 274 to 307 (NSHV…ILSP), 308 to 343 (DLVV…GHRP), 344 to 378 (DDCS…HIPS), 380 to 410 (RISV…MPEL), 411 to 445 (NAVS…GIAP), 446 to 476 (NKIT…MKET), and 482 to 512 (EAEH…MPYK). The segment at 517 to 592 (AWAALLGACR…KPGCSWIEVK (76 aa)) is type E motif. The interval 593–623 (KKKHVFVAEDWSHPMIREVNEYLEEMMKKMK) is type E(+) motif. The segment at 624–721 (KVGYVMDKKW…DGKCSCGDYW (98 aa)) is type DYW motif.

It belongs to the PPR family. PCMP-H subfamily.

This is Pentatricopeptide repeat-containing protein At3g49710 (PCMP-H79) from Arabidopsis thaliana (Mouse-ear cress).